The following is a 373-amino-acid chain: RNA 3'-terminal phosphate cyclase-like protein (373 aa).

Belongs to the RNA 3'-terminal cyclase family. Type 2 subfamily. In terms of assembly, part of the small subunit (SSU) processome, composed of more than 70 proteins and the RNA chaperone small nucleolar RNA (snoRNA) U3. Interacts with BMS1.

Its subcellular location is the nucleus. The protein localises to the nucleolus. As part of the small subunit (SSU) processome, it plays a role in 40S-ribosomal-subunit biogenesis in the early pre-rRNA processing steps at sites A0, A1 and A2 that are required for proper maturation of the 18S RNA. Activates BMS1 by promoting GDP/GTP exchange. Does not have cyclase activity. The protein is RNA 3'-terminal phosphate cyclase-like protein (RCL1) of Bos taurus (Bovine).